A 795-amino-acid polypeptide reads, in one-letter code: Protocadherin beta-12 (795 aa).

A signal peptide spans 1-26; the sequence is MENGGAGTLQIRQVLLFFVLLGMSQA. Residues 27–690 are Extracellular-facing; the sequence is GSETGNFLVM…AQADSLTVYL (664 aa). Cadherin domains follow at residues 35–133, 138–242, 247–347, 352–451, and 456–561; these read VMEE…SPVF, MLLE…SPEF, YEVK…APEI, ITSP…APAF, and YALF…SPFV. N-linked (GlcNAc...) asparagine glycosylation is found at N418, N436, N487, and N567. The Cadherin 6 domain maps to 568–671; it reads GSAPCTELVP…LVDGFSQPYL (104 aa). The helical transmembrane segment at 691-711 threads the bilayer; the sequence is VVALASVSSLFLFSVLLFVAV. Topologically, residues 712–795 are cytoplasmic; the sequence is RLCRRSRAAP…NPPFQNNLGF (84 aa).

It is found in the cell membrane. Functionally, potential calcium-dependent cell-adhesion protein. May be involved in the establishment and maintenance of specific neuronal connections in the brain. This Homo sapiens (Human) protein is Protocadherin beta-12 (PCDHB12).